Consider the following 359-residue polypeptide: Peptide chain release factor 1 (359 aa).

Glutamine 236 bears the N5-methylglutamine mark.

The protein belongs to the prokaryotic/mitochondrial release factor family. In terms of processing, methylated by PrmC. Methylation increases the termination efficiency of RF1.

Its subcellular location is the cytoplasm. In terms of biological role, peptide chain release factor 1 directs the termination of translation in response to the peptide chain termination codons UAG and UAA. The chain is Peptide chain release factor 1 from Streptococcus pyogenes serotype M6 (strain ATCC BAA-946 / MGAS10394).